The sequence spans 289 residues: RNA exonuclease 4 (289 aa).

Over residues methionine 1–lysine 24 the composition is skewed to polar residues. The disordered stretch occupies residues methionine 1–lysine 34. The segment covering glutamine 25 to lysine 34 has biased composition (basic residues). One can recognise an Exonuclease domain in the interval tyrosine 121–tyrosine 273.

The protein belongs to the REXO4 family.

It localises to the nucleus. Exoribonuclease involved in ribosome biosynthesis. Involved in the processing of ITS1, the internal transcribed spacer localized between the 18S and 5.8S rRNAs. The polypeptide is RNA exonuclease 4 (REX4) (Saccharomyces cerevisiae (strain ATCC 204508 / S288c) (Baker's yeast)).